The chain runs to 121 residues: Natriuretic peptides B (121 aa).

A signal peptide spans 1–26 (MDLQKVLPQMILLLLFLNLSPLGGHS). A disulfide bridge connects residues Cys99 and Cys115.

This sequence belongs to the natriuretic peptide family. The precursor molecule is proteolytically cleaved by the endoprotease Furin to produce brain natriuretic peptide 45. May undergo further proteolytic cleavage by various proteases such as DPP4, MME and possibly FAP, to give rise to a variety of shorter peptides. May be cleaved at Ser-91 by the prolyl endopeptidase FAP (seprase) activity (in vitro). May be degraded by IDE. During IDE degradation, the resulting products initially increase the activation of NPR1 and can also stimulate NPR2 to produce cGMP before the fragments are completely degraded and inactivated by IDE (in vitro). As to expression, expressed in the atria and ventricles, but at much lower levels than NPPA. Expression levels in the ventricles are slightly higher than in the atria. Very low levels of expression detected in the brain, hypothalamus, lung and aorta. Atria (at protein level). Cardiocytes (at protein level).

Its subcellular location is the secreted. Cardiac hormone that plays a key role in mediating cardio-renal homeostasis. May also function as a paracrine antifibrotic factor in the heart. Acts by specifically binding and stimulating NPR1 to produce cGMP, which in turn activates effector proteins that drive various biological responses. Likely involved in regulating the extracellular fluid volume and maintaining the fluid-electrolyte balance through natriuresis, diuresis, kaluresis and chloruresis. The chain is Natriuretic peptides B (Nppb) from Rattus norvegicus (Rat).